The sequence spans 208 residues: Sodium/potassium-transporting ATPase subunit beta-1-interacting protein 2 (208 aa).

4 helical membrane passes run 1 to 23 (MGYCSGRCTLIFICGMQLVCVLE), 35 to 55 (APILANFVHIIIVILGLFGTI), 64 to 84 (GYAVWLVLWVTWNVFVICFYL), and 148 to 168 (VAHSSLQIVLALAGFIYACYV).

Belongs to the NKAIN family. Interacts with ATP1B1. Detected in the brain only and specifically in neurons; expressed in multiple regions such as cerebral cortex, thalamus, cerebellum, olfactory bulb and brainstem, but not in the hippocampus.

The protein localises to the cell membrane. This is Sodium/potassium-transporting ATPase subunit beta-1-interacting protein 2 (Nkain2) from Mus musculus (Mouse).